We begin with the raw amino-acid sequence, 176 residues long: Glutathione-regulated potassium-efflux system ancillary protein KefF (176 aa).

Residues His8, 14–17 (SHAN), 65–68 (MQWY), and 105–108 (TTGG) contribute to the FMN site.

The protein belongs to the NAD(P)H dehydrogenase (quinone) family. KefF subfamily. As to quaternary structure, homodimer. Interacts with KefC. Requires FMN as cofactor.

It is found in the cell inner membrane. It catalyses the reaction a quinone + NADH + H(+) = a quinol + NAD(+). The catalysed reaction is a quinone + NADPH + H(+) = a quinol + NADP(+). Functionally, regulatory subunit of a potassium efflux system that confers protection against electrophiles. Required for full activity of KefC. Shows redox enzymatic activity, but this enzymatic activity is not required for activation of KefC. This Salmonella gallinarum (strain 287/91 / NCTC 13346) protein is Glutathione-regulated potassium-efflux system ancillary protein KefF.